The sequence spans 150 residues: 3-hydroxyacyl-[acyl-carrier-protein] dehydratase FabZ (150 aa).

The active site involves H51.

It belongs to the thioester dehydratase family. FabZ subfamily.

The protein resides in the cytoplasm. It carries out the reaction a (3R)-hydroxyacyl-[ACP] = a (2E)-enoyl-[ACP] + H2O. In terms of biological role, involved in unsaturated fatty acids biosynthesis. Catalyzes the dehydration of short chain beta-hydroxyacyl-ACPs and long chain saturated and unsaturated beta-hydroxyacyl-ACPs. This Legionella pneumophila (strain Lens) protein is 3-hydroxyacyl-[acyl-carrier-protein] dehydratase FabZ.